A 570-amino-acid chain; its full sequence is 5-aminolevulinate synthase, mitochondrial (570 aa).

A mitochondrion-targeting transit peptide spans 1 to 53 (MESVIRSSAKICPFMHSATGSMQSVKALKNANLPAIAQQCPFMGKAMEQRRGY). The substrate site is built by R119, S232, and K251. Residues S284, H312, and T356 each contribute to the pyridoxal 5'-phosphate site. Residue K359 is part of the active site. N6-(pyridoxal phosphate)lysine is present on K359. T388 and T389 together coordinate pyridoxal 5'-phosphate. T474 is a binding site for substrate.

Belongs to the class-II pyridoxal-phosphate-dependent aminotransferase family. As to quaternary structure, homodimer. Pyridoxal 5'-phosphate serves as cofactor.

It localises to the mitochondrion matrix. It catalyses the reaction succinyl-CoA + glycine + H(+) = 5-aminolevulinate + CO2 + CoA. Its pathway is porphyrin-containing compound metabolism; protoporphyrin-IX biosynthesis; 5-aminolevulinate from glycine: step 1/1. Catalyzes the synthesis of 5-aminolevulinate (ALA) from succinyl-CoA and glycine, the first and rate-limiting step in heme biosynthesis. This chain is 5-aminolevulinate synthase, mitochondrial (HEM1), found in Kluyveromyces lactis (strain ATCC 8585 / CBS 2359 / DSM 70799 / NBRC 1267 / NRRL Y-1140 / WM37) (Yeast).